A 186-amino-acid polypeptide reads, in one-letter code: CASP-like protein 4C2 (186 aa).

The Cytoplasmic portion of the chain corresponds to Met1–Ser31. The helical transmembrane segment at Leu32–Leu52 threads the bilayer. Topologically, residues Thr53–Tyr71 are extracellular. Residues Val72 to Trp92 traverse the membrane as a helical segment. The Cytoplasmic segment spans residues Glu93–Glu103. Residues Ile104–Ala124 form a helical membrane-spanning segment. Residues Asn125–Asp150 lie on the Extracellular side of the membrane. The helical transmembrane segment at Ile151–Gly171 threads the bilayer. The Cytoplasmic portion of the chain corresponds to Phe172 to Val186.

It belongs to the Casparian strip membrane proteins (CASP) family. In terms of assembly, homodimer and heterodimers.

It localises to the cell membrane. In Populus trichocarpa (Western balsam poplar), this protein is CASP-like protein 4C2.